A 177-amino-acid polypeptide reads, in one-letter code: Putative rubredoxin (177 aa).

The region spanning 1–38 (MKICRICGYQIPEGEFNLLEDGWVCPRCGVGKEELQDS) is the Rubredoxin-like domain. Fe cation contacts are provided by Cys-4, Cys-7, Cys-25, and Cys-28.

The protein belongs to the rubredoxin family. It depends on Fe(3+) as a cofactor.

The sequence is that of Putative rubredoxin (rdxA) from Methanothermobacter thermautotrophicus (strain ATCC 29096 / DSM 1053 / JCM 10044 / NBRC 100330 / Delta H) (Methanobacterium thermoautotrophicum).